A 517-amino-acid polypeptide reads, in one-letter code: Glucose-6-phosphate isomerase (517 aa).

Glu-345 serves as the catalytic Proton donor. Residues His-376 and Lys-490 contribute to the active site.

This sequence belongs to the GPI family.

Its subcellular location is the cytoplasm. The catalysed reaction is alpha-D-glucose 6-phosphate = beta-D-fructose 6-phosphate. It functions in the pathway carbohydrate biosynthesis; gluconeogenesis. Its pathway is carbohydrate degradation; glycolysis; D-glyceraldehyde 3-phosphate and glycerone phosphate from D-glucose: step 2/4. Its function is as follows. Catalyzes the reversible isomerization of glucose-6-phosphate to fructose-6-phosphate. This Erythrobacter litoralis (strain HTCC2594) protein is Glucose-6-phosphate isomerase.